A 174-amino-acid chain; its full sequence is Ribosome maturation factor RimP (174 aa).

The protein belongs to the RimP family.

Its subcellular location is the cytoplasm. Required for maturation of 30S ribosomal subunits. The protein is Ribosome maturation factor RimP of Acinetobacter baumannii (strain AB307-0294).